The following is a 341-amino-acid chain: Zinc finger protein ZIC 4 (341 aa).

The segment at 36-66 is disordered; sequence HHGPQLAASSNPSVLPGLHEQPPQASHSRPL. The C2H2-type 1; atypical zinc-finger motif lies at 135 to 169; that stretch reads LICKWLGDDSPMSPRPCSKTFSTMHELVTHVTVEH. The C2H2-type 2; atypical zinc finger occupies 178 to 205; the sequence is HICFWEECPRQGKPFKAKYKLVNHIRVH. 3 C2H2-type zinc fingers span residues 211 to 235, 241 to 265, and 271 to 295; these read FPCPFPGCGKVFARSENLKIHKRTH, FRCEFEGCERRFANSSDRKKHSHVH, and YMCKVRGCDKCYTHPSSLRKHMKVH. Residues 289-309 are disordered; sequence RKHMKVHGRSPPPSSGYDSAI.

The protein belongs to the GLI C2H2-type zinc-finger protein family. As to expression, exclusively expressed in the cerebellum.

The protein resides in the nucleus. Its function is as follows. Binds to DNA. The chain is Zinc finger protein ZIC 4 (Zic4) from Mus musculus (Mouse).